A 350-amino-acid chain; its full sequence is Putative ATP-binding protein BRA0745/BS1330_II0738 (350 aa).

The region spanning 4–234 (VSLRGISKTF…PANKFVAGFI (231 aa)) is the ABC transporter domain. 36–43 (GPSGCGKS) serves as a coordination point for ATP.

Belongs to the ABC transporter superfamily. In terms of assembly, the complex is composed of two ATP-binding proteins (BRA0745), two transmembrane proteins (BRA0749) and a solute-binding protein (BRA0748).

The protein resides in the cell inner membrane. Its function is as follows. Probably part of an ABC transporter complex. Probably responsible for energy coupling to the transport system. The chain is Putative ATP-binding protein BRA0745/BS1330_II0738 from Brucella suis biovar 1 (strain 1330).